Consider the following 130-residue polypeptide: Holo-[acyl-carrier-protein] synthase (130 aa).

Mg(2+) contacts are provided by D9 and E58.

Belongs to the P-Pant transferase superfamily. AcpS family. Mg(2+) is required as a cofactor.

Its subcellular location is the cytoplasm. It carries out the reaction apo-[ACP] + CoA = holo-[ACP] + adenosine 3',5'-bisphosphate + H(+). Transfers the 4'-phosphopantetheine moiety from coenzyme A to a Ser of acyl-carrier-protein. This Mycobacterium bovis (strain ATCC BAA-935 / AF2122/97) protein is Holo-[acyl-carrier-protein] synthase.